Consider the following 410-residue polypeptide: Argininosuccinate synthase (410 aa).

Residue 8 to 16 (AYSGGLDTS) coordinates ATP. L-citrulline is bound at residue tyrosine 86. Glycine 116 is an ATP binding site. The L-aspartate site is built by threonine 118, asparagine 122, and aspartate 123. Residue asparagine 122 participates in L-citrulline binding. Residues arginine 126, serine 174, glutamate 259, and tyrosine 271 each coordinate L-citrulline.

The protein belongs to the argininosuccinate synthase family. Type 1 subfamily. Homotetramer.

It is found in the cytoplasm. The enzyme catalyses L-citrulline + L-aspartate + ATP = 2-(N(omega)-L-arginino)succinate + AMP + diphosphate + H(+). It functions in the pathway amino-acid biosynthesis; L-arginine biosynthesis; L-arginine from L-ornithine and carbamoyl phosphate: step 2/3. This chain is Argininosuccinate synthase, found in Leuconostoc citreum (strain KM20).